The following is a 154-amino-acid chain: Large ribosomal subunit protein eL24 (154 aa).

The segment at 92–154 (AKRNQKPEVR…AAAPRVGGKR (63 aa)) is disordered. The span at 96 to 122 (QKPEVRKAQREQAVKAAKEKKKADQVG) shows a compositional bias: basic and acidic residues. A compositionally biased stretch (low complexity) spans 129-154 (KARATAPKTKAPKTVKAAAPRVGGKR).

Belongs to the eukaryotic ribosomal protein eL24 family.

This is Large ribosomal subunit protein eL24 (RPL24) from Branchiostoma belcheri (Amphioxus).